The following is a 210-amino-acid chain: Ribosomal RNA small subunit methyltransferase G (210 aa).

S-adenosyl-L-methionine is bound by residues glycine 76, leucine 81, 127-128, and arginine 142; that span reads VE.

This sequence belongs to the methyltransferase superfamily. RNA methyltransferase RsmG family.

The protein resides in the cytoplasm. The catalysed reaction is guanosine(527) in 16S rRNA + S-adenosyl-L-methionine = N(7)-methylguanosine(527) in 16S rRNA + S-adenosyl-L-homocysteine. Functionally, specifically methylates the N7 position of guanine in position 527 of 16S rRNA. In Vibrio cholerae serotype O1 (strain ATCC 39541 / Classical Ogawa 395 / O395), this protein is Ribosomal RNA small subunit methyltransferase G.